Reading from the N-terminus, the 92-residue chain is Small ribosomal subunit protein uS15c (92 aa).

The protein belongs to the universal ribosomal protein uS15 family. Part of the 30S ribosomal subunit.

It localises to the plastid. The protein localises to the chloroplast. In Guizotia abyssinica (Niger), this protein is Small ribosomal subunit protein uS15c (rps15).